Consider the following 124-residue polypeptide: WAP four-disulfide core domain protein 2 (124 aa).

A signal peptide spans 1–27 (MPACRPGPLAGALLLGLLLLGLPRVPG). 2 WAP domains span residues 29-73 (EVEK…CHLP) and 74-123 (NEKE…VTPI). 8 cysteine pairs are disulfide-bonded: Cys36-Cys62, Cys45-Cys66, Cys49-Cys61, Cys55-Cys70, Cys80-Cys110, Cys93-Cys114, Cys97-Cys109, and Cys103-Cys119. The N-linked (GlcNAc...) asparagine glycan is linked to Asn44.

In terms of assembly, homotrimer; disulfide-linked. Epididymis. Highest levels are found in the caput and proximal cauda regions. Lower levels in the distal cauda. Not detected in the efferent ducts.

The protein resides in the secreted. Functionally, broad range protease inhibitor. Possible function in sperm maturation. In Canis lupus familiaris (Dog), this protein is WAP four-disulfide core domain protein 2 (WFDC2).